The primary structure comprises 287 residues: Protein-export membrane protein SecF (287 aa).

Helical transmembrane passes span 21-41 (LIAIPAAITVIALLLVVFNGL), 129-149 (QIYWAIGFAFLFMSVTVFIIF), 158-178 (VILAAASDIIIAVGGMSLFGI), 182-202 (LASVGAILMLIGYSVDTDILL), 226-246 (VTMSIAAIASMAALYLVTVFV), and 259-279 (VLIIGLLADILTTWLMNLGIL).

Belongs to the SecD/SecF family. SecF subfamily. In terms of assembly, part of the protein translocation apparatus. Forms a complex with SecD.

The protein localises to the cell membrane. In terms of biological role, involved in protein export. In Methanothermobacter thermautotrophicus (strain ATCC 29096 / DSM 1053 / JCM 10044 / NBRC 100330 / Delta H) (Methanobacterium thermoautotrophicum), this protein is Protein-export membrane protein SecF.